Reading from the N-terminus, the 982-residue chain is E3 ubiquitin-protein ligase CBL-B (982 aa).

Residues 35 to 167 (PPKQAAADRR…KAIFPNGQFQ (133 aa)) are 4H. In terms of domain architecture, Cbl-PTB spans 35–343 (PPKQAAADRR…GRSYNPDLTG (309 aa)). The tract at residues 168-240 (GDNFRITKAD…FEFDIFTRLF (73 aa)) is EF-hand-like. Ca(2+) is bound by residues aspartate 221, threonine 223, asparagine 225, tyrosine 227, and glutamate 232. The segment at 241-343 (QPWGSILRNW…GRSYNPDLTG (103 aa)) is SH2-like. Serine 282 carries the post-translational modification Phosphoserine; by PKC/PRKCQ. Arginine 286 contacts 4-O-phospho-L-tyrosine. A linker region spans residues 344–372 (LCEPTPHDHIKVTQEQYELYCEMGSTFQL). Tyrosine 363 carries the post-translational modification Phosphotyrosine. The RING-type zinc-finger motif lies at 373-412 (CKICAENDKDVKIEPCGHLMCTSCLTAWQESDGQGCPFCR). The tract at residues 465–588 (ASVRKCTDRQ…SVPSRDQPMP (124 aa)) is disordered. Residues 473 to 486 (RQNSPVTSPGSSPL) are compositionally biased toward polar residues. Phosphoserine is present on residues serine 476, serine 480, serine 484, serine 521, serine 525, and serine 529. Residues 543-567 (PLPAPPPPLRDPPPPPERPPPIPPD) are interaction with VAV1. Residues 544 to 566 (LPAPPPPLRDPPPPPERPPPIPP) are compositionally biased toward pro residues. Position 633 is a phosphoserine (serine 633). Tyrosine 664 and tyrosine 708 each carry phosphotyrosine. Disordered stretches follow at residues 702–723 (EDDD…SQPS) and 745–929 (THGA…EAAL). Residues 714 to 723 (HPVSLNSQPS) show a composition bias toward polar residues. A compositionally biased stretch (pro residues) spans 819–828 (PSLPPPPPPA). The segment covering 838 to 848 (PPGSSSRPSSG) has biased composition (low complexity). The span at 884-899 (RASQDYDQLPSSSDGS) shows a compositional bias: polar residues. Tyrosine 889 is modified (phosphotyrosine). The interval 891 to 927 (QLPSSSDGSQAPARPPKPRPRRTAPEIHHRKPHGPEA) is interaction with SH3KBP1. Basic residues predominate over residues 906–922 (PKPRPRRTAPEIHHRKP). A UBA domain is found at 931–970 (NVDAKIAKLMGEGYAFEEVKRALEIAQNNVEVARSILREF).

Interacts with SH3 domain-containing proteins LCK, CRK and SORBS1. Interacts with LCP2 and ZAP70. Interacts with CBL. Interacts with SH3 domain-containing proteins VAV1, FYN, FGR, PLCG1, GRB2, CRKL, PIK3R1 and SH3KBP1/CIN85. Identified in heterotrimeric complexes with SH3KBP1/CIN85, CD2AP and ARHGEF7, where one CBLB peptide binds two copies of the other protein. Interacts with poly-ubiquitinated proteins. Dimerization is required for the binding of poly-ubiquitin, but not for the binding of mono-ubiquitin. Interacts with EGFR (phosphorylated). Interacts with IFT20. Phosphorylated on tyrosine and serine residues upon TCR or BCR activation. Phosphorylated on Tyr-664 and Tyr-708 in adipocytes following insulin stimulation. In terms of processing, auto-ubiquitinated upon EGF-mediated cell activation or upon T-cell costimulation by CD28; which promotes proteasomal degradation.

The protein resides in the cytoplasm. It carries out the reaction S-ubiquitinyl-[E2 ubiquitin-conjugating enzyme]-L-cysteine + [acceptor protein]-L-lysine = [E2 ubiquitin-conjugating enzyme]-L-cysteine + N(6)-ubiquitinyl-[acceptor protein]-L-lysine.. The protein operates within protein modification; protein ubiquitination. E3 ubiquitin-protein ligase which accepts ubiquitin from specific E2 ubiquitin-conjugating enzymes, and transfers it to substrates, generally promoting their degradation by the proteasome. Negatively regulates TCR (T-cell receptor), BCR (B-cell receptor) and FCER1 (high affinity immunoglobulin epsilon receptor) signal transduction pathways. In naive T-cells, inhibits VAV1 activation upon TCR engagement and imposes a requirement for CD28 costimulation for proliferation and IL-2 production. Also acts by promoting PIK3R1/p85 ubiquitination, which impairs its recruitment to the TCR and subsequent activation. In activated T-cells, inhibits PLCG1 activation and calcium mobilization upon restimulation and promotes anergy. In B-cells, acts by ubiquitinating SYK and promoting its proteasomal degradation. Slightly promotes SRC ubiquitination. May be involved in EGFR ubiquitination and internalization. May be functionally coupled with the E2 ubiquitin-protein ligase UB2D3. In association with CBL, required for proper feedback inhibition of ciliary platelet-derived growth factor receptor-alpha (PDGFRA) signaling pathway via ubiquitination and internalization of PDGFRA. The protein is E3 ubiquitin-protein ligase CBL-B (Cblb) of Mus musculus (Mouse).